Reading from the N-terminus, the 217-residue chain is uncharacterized protein (217 aa).

This is an uncharacterized protein from Homo sapiens (Human).